Reading from the N-terminus, the 732-residue chain is Guanylate cyclase soluble subunit alpha-2 (732 aa).

The interval 1-58 (MSRRKISSESFSSLGSDYLETSPEEEGECPLSRLCWNGSRSPPGPLEPSPAAAAAAAA) is disordered. The segment covering 49–58 (SPAAAAAAAA) has biased composition (low complexity). The region spanning 521 to 648 (TMLFSDIVGF…NNVTLASKFE (128 aa)) is the Guanylate cyclase domain.

Belongs to the adenylyl cyclase class-4/guanylyl cyclase family. As to quaternary structure, heterodimer of an alpha and a beta chain. Isoform 1 is expressed in fetal brain, liver, colon, endothelium and testis. Isoform 2 is expressed only in liver, colon and endothelium.

Its subcellular location is the cytoplasm. It carries out the reaction GTP = 3',5'-cyclic GMP + diphosphate. Its activity is regulated as follows. Activated by nitric oxide in the presence of magnesium or manganese ions. Functionally, has guanylyl cyclase on binding to the beta-1 subunit. Its function is as follows. Isoform 2 acts as a negative regulator of guanylyl cyclase activity as it forms non-functional heterodimers with the beta subunits. This chain is Guanylate cyclase soluble subunit alpha-2 (GUCY1A2), found in Homo sapiens (Human).